The following is a 324-amino-acid chain: Cytochrome f (324 aa).

Residues 1–30 form the signal peptide; the sequence is MNMRFSPKALVRQLGRLSLVACLSLGLLGA. Residues tyrosine 42, cysteine 62, cysteine 65, and histidine 66 each coordinate heme. Residues 290 to 310 form a helical membrane-spanning segment; it reads VLGVIAFFFAVMLAQIMLVLK.

This sequence belongs to the cytochrome f family. The 4 large subunits of the cytochrome b6-f complex are cytochrome b6, subunit IV (17 kDa polypeptide, PetD), cytochrome f and the Rieske protein, while the 4 small subunits are PetG, PetL, PetM and PetN. The complex functions as a dimer. Heme is required as a cofactor.

The protein localises to the cellular thylakoid membrane. Its function is as follows. Component of the cytochrome b6-f complex, which mediates electron transfer between photosystem II (PSII) and photosystem I (PSI), cyclic electron flow around PSI, and state transitions. In Synechococcus elongatus (strain ATCC 33912 / PCC 7942 / FACHB-805) (Anacystis nidulans R2), this protein is Cytochrome f.